Consider the following 462-residue polypeptide: Glycine--tRNA ligase (462 aa).

Arg100 and Glu174 together coordinate substrate. ATP contacts are provided by residues 206–208, 216–221, 290–291, and 334–337; these read RNE, FRTREF, EL, and GADR. Substrate is bound at residue 221-225; the sequence is FEQME. 330-334 is a binding site for substrate; sequence EPSLG.

Belongs to the class-II aminoacyl-tRNA synthetase family. As to quaternary structure, homodimer.

It localises to the cytoplasm. It carries out the reaction tRNA(Gly) + glycine + ATP = glycyl-tRNA(Gly) + AMP + diphosphate. Its function is as follows. Catalyzes the attachment of glycine to tRNA(Gly). The polypeptide is Glycine--tRNA ligase (Alkaliphilus metalliredigens (strain QYMF)).